The primary structure comprises 408 residues: UPF0761 membrane protein azo3165 (408 aa).

The next 7 helical transmembrane spans lie at 29–49 (LAFT…GVFG), 92–112 (LTLI…ATIE), 131–151 (ITVS…SVVA), 172–192 (IAAA…LYYA), 197–217 (PVRL…FLLM), 220–240 (GLGL…TFAA), and 241–261 (LPIF…GALI).

This sequence belongs to the UPF0761 family.

It is found in the cell inner membrane. In Azoarcus sp. (strain BH72), this protein is UPF0761 membrane protein azo3165.